Consider the following 95-residue polypeptide: CRISPR-associated endoribonuclease Cas2 (95 aa).

Asp-9 is a Mg(2+) binding site.

The protein belongs to the CRISPR-associated endoribonuclease Cas2 protein family. As to quaternary structure, homodimer, forms a heterotetramer with a Cas1 homodimer. Mg(2+) is required as a cofactor.

Functionally, CRISPR (clustered regularly interspaced short palindromic repeat), is an adaptive immune system that provides protection against mobile genetic elements (viruses, transposable elements and conjugative plasmids). CRISPR clusters contain sequences complementary to antecedent mobile elements and target invading nucleic acids. CRISPR clusters are transcribed and processed into CRISPR RNA (crRNA). Functions as a ssRNA-specific endoribonuclease. Involved in the integration of spacer DNA into the CRISPR cassette. In Methylorubrum extorquens (strain CM4 / NCIMB 13688) (Methylobacterium extorquens), this protein is CRISPR-associated endoribonuclease Cas2.